Consider the following 145-residue polypeptide: Class I hydrophobin 1 (145 aa).

Residues 1–18 (MYASVIIYTLVALCGVMS) form the signal peptide. Disulfide bonds link C88–C118, C95–C112, C96–C106, and C119–C128. A glycan (N-linked (GlcNAc...) asparagine) is linked at N108.

The protein belongs to the fungal hydrophobin family. As to quaternary structure, self-assembles to form functional amyloid fibrils called rodlets. Self-assembly into fibrillar rodlets occurs spontaneously at hydrophobic:hydrophilic interfaces and the rodlets further associate laterally to form amphipathic monolayers.

Its subcellular location is the secreted. The protein localises to the cell wall. Its function is as follows. Aerial growth, conidiation, and dispersal of filamentous fungi in the environment rely upon a capability of their secreting small amphipathic proteins called hydrophobins (HPBs) with low sequence identity. Class I can self-assemble into an outermost layer of rodlet bundles on aerial cell surfaces, conferring cellular hydrophobicity that supports fungal growth, development and dispersal; whereas Class II form highly ordered films at water-air interfaces through intermolecular interactions but contribute nothing to the rodlet structure. Hyd1 is a class I hydrophobin that is involved in plant root attachment and colonization, and that might also protect the growing hyphae from locally synthesized plant defense compounds during the first stages of cucumber interaction, allowing this opportunistic, non-pathogenic fungus to colonize the intercellular spaces of the plant root. The protein is Class I hydrophobin 1 of Trichoderma asperellum (Filamentous fungus).